We begin with the raw amino-acid sequence, 208 residues long: Probable GTP-binding protein EngB (208 aa).

The EngB-type G domain occupies 22 to 195 (GLPEIALAGR…WGALEDIFVE (174 aa)). Residues 30-37 (GRSNVGKS), 57-61 (GKTRT), 75-78 (DLPG), 142-145 (TKSD), and 174-176 (ISS) each bind GTP. Positions 37 and 59 each coordinate Mg(2+).

The protein belongs to the TRAFAC class TrmE-Era-EngA-EngB-Septin-like GTPase superfamily. EngB GTPase family. The cofactor is Mg(2+).

Functionally, necessary for normal cell division and for the maintenance of normal septation. This chain is Probable GTP-binding protein EngB, found in Alkaliphilus metalliredigens (strain QYMF).